The chain runs to 185 residues: Translocon-associated protein subunit gamma (185 aa).

M1 carries the post-translational modification N-acetylmethionine. The Lumenal portion of the chain corresponds to 1-27 (MAPKGSSKQQSEEDLLLQDFSRNLSAK). A phosphoserine mark is found at S7 and S11. Residues 28–48 (SSALFFGNAFIVSAIPIWLYW) form a helical membrane-spanning segment. Residues 49–54 (RIWHMD) lie on the Cytoplasmic side of the membrane. A helical transmembrane segment spans residues 55–76 (LIQSAVLYSVMTLVSTYLVAFA). The Lumenal segment spans residues 77–135 (YKNVKFVLKHKVAQKREDAVSKEVTRKLSEADNRKMSRKEKDERILWKKNEVADYEATT). S105 bears the Phosphoserine mark. Residues 136–157 (FSIFYNNTLFLVVVIVASFFIL) form a helical membrane-spanning segment. The Cytoplasmic portion of the chain corresponds to 158-163 (KNFNPT). Residues 164 to 184 (VNYILSISASSGLIALLSTGS) traverse the membrane as a helical segment.

This sequence belongs to the TRAP-gamma family. As to quaternary structure, heterotetramer of TRAP-alpha, TRAP-beta, TRAP-delta and TRAP-gamma.

It is found in the endoplasmic reticulum membrane. TRAP proteins are part of a complex whose function is to bind calcium to the ER membrane and thereby regulate the retention of ER resident proteins. The polypeptide is Translocon-associated protein subunit gamma (SSR3) (Homo sapiens (Human)).